We begin with the raw amino-acid sequence, 339 residues long: Uroporphyrinogen decarboxylase (339 aa).

Residues 23 to 27 (RQAGR), Asp-72, Tyr-147, Thr-202, and His-315 contribute to the substrate site.

Belongs to the uroporphyrinogen decarboxylase family. As to quaternary structure, homodimer.

The protein localises to the cytoplasm. The enzyme catalyses uroporphyrinogen III + 4 H(+) = coproporphyrinogen III + 4 CO2. It functions in the pathway porphyrin-containing compound metabolism; protoporphyrin-IX biosynthesis; coproporphyrinogen-III from 5-aminolevulinate: step 4/4. Functionally, catalyzes the decarboxylation of four acetate groups of uroporphyrinogen-III to yield coproporphyrinogen-III. The protein is Uroporphyrinogen decarboxylase of Geotalea uraniireducens (strain Rf4) (Geobacter uraniireducens).